Consider the following 76-residue polypeptide: Large ribosomal subunit protein eL20 (76 aa).

The protein belongs to the eukaryotic ribosomal protein eL20 family. As to quaternary structure, part of the 50S ribosomal subunit. Binds 23S rRNA.

This is Large ribosomal subunit protein eL20 from Methanococcus maripaludis (strain C7 / ATCC BAA-1331).